Consider the following 602-residue polypeptide: Elongation factor 4 (602 aa).

Residues 8 to 190 enclose the tr-type G domain; sequence DLIRNFSIVA…AIVHRLPPPK (183 aa). Residues 20 to 25 and 137 to 140 contribute to the GTP site; these read DHGKST and NKID.

This sequence belongs to the TRAFAC class translation factor GTPase superfamily. Classic translation factor GTPase family. LepA subfamily.

Its subcellular location is the cell inner membrane. It catalyses the reaction GTP + H2O = GDP + phosphate + H(+). Functionally, required for accurate and efficient protein synthesis under certain stress conditions. May act as a fidelity factor of the translation reaction, by catalyzing a one-codon backward translocation of tRNAs on improperly translocated ribosomes. Back-translocation proceeds from a post-translocation (POST) complex to a pre-translocation (PRE) complex, thus giving elongation factor G a second chance to translocate the tRNAs correctly. Binds to ribosomes in a GTP-dependent manner. The chain is Elongation factor 4 from Cereibacter sphaeroides (strain ATCC 17023 / DSM 158 / JCM 6121 / CCUG 31486 / LMG 2827 / NBRC 12203 / NCIMB 8253 / ATH 2.4.1.) (Rhodobacter sphaeroides).